Consider the following 443-residue polypeptide: Thymidine phosphorylase (443 aa).

Belongs to the thymidine/pyrimidine-nucleoside phosphorylase family. Homodimer.

The catalysed reaction is thymidine + phosphate = 2-deoxy-alpha-D-ribose 1-phosphate + thymine. It functions in the pathway pyrimidine metabolism; dTMP biosynthesis via salvage pathway; dTMP from thymine: step 1/2. Its function is as follows. The enzymes which catalyze the reversible phosphorolysis of pyrimidine nucleosides are involved in the degradation of these compounds and in their utilization as carbon and energy sources, or in the rescue of pyrimidine bases for nucleotide synthesis. The protein is Thymidine phosphorylase of Shewanella loihica (strain ATCC BAA-1088 / PV-4).